A 306-amino-acid chain; its full sequence is [methyl-Co(III) glycine betaine-specific corrinoid protein]--tetrahydrofolate methyltransferase (306 aa).

The protein belongs to the MtrH family.

The catalysed reaction is methyl-Co(III)-[glycine betaine-specific corrinoid protein] + (6S)-5,6,7,8-tetrahydrofolate = Co(I)-[glycine betaine-specific corrinoid protein] + (6S)-5-methyl-5,6,7,8-tetrahydrofolate + H(+). Functionally, methyltransferase able to catalyze the transfer of a methyl group from methylcobalamin (methylCbl) to tetrahydrofolate (THF) in vitro, to generate methyl-THF and cob(I)alamin. In vivo, the methyl group probably comes from the adjacently encoded methylated corrinoid protein DSY3155. The methyl group may then be ultimately converted to carbon dioxide, and its oxidation would also provide reducing equivalents for anaerobic respiration. Thus, may function in the pathway that allows anaerobic methylotrophic growth of D.hafniense using glycine betaine. This Desulfitobacterium hafniense (strain Y51) protein is [methyl-Co(III) glycine betaine-specific corrinoid protein]--tetrahydrofolate methyltransferase.